The following is a 673-amino-acid chain: ATP-binding cassette sub-family G member 8 (673 aa).

Over residues 1–11 (MAGKAAEERGL) the composition is skewed to basic and acidic residues. A disordered region spans residues 1-25 (MAGKAAEERGLPKGATPQDTSGLQD). The Cytoplasmic segment spans residues 1-416 (MAGKAAEERG…ISNDFRDLPT (416 aa)). Positions 47-313 (LEVRDLNYQV…FTAIGYPCPR (267 aa)) constitute an ABC transporter domain. Residues 411–665 (FRDLPTLLIH…VLYYVSLRFI (255 aa)) form the ABC transmembrane type-2 domain. Residues 417-437 (LLIHGAEACLMSMTIGFLYFG) form a helical membrane-spanning segment. The Extracellular segment spans residues 438–447 (HGSIQLSFMD). Residues 448 to 468 (TAALLFMIGALIPFNVILDVI) traverse the membrane as a helical segment. At 469–497 (SKCYSERAMLYYELEDGLYTTGPYFFAKI) the chain is on the cytoplasmic side. The helical transmembrane segment at 498–518 (LGELPEHCAYIIIYGMPTYWL) threads the bilayer. Residues 519-527 (ANLRPGLQP) are Extracellular-facing. A helical transmembrane segment spans residues 528 to 548 (FLLHFLLVWLVVFCCRIMALA). Over 549–555 (AAALLPT) the chain is Cytoplasmic. The helical transmembrane segment at 556–576 (FHMASFFSNALYNSFYLAGGF) threads the bilayer. At 577 to 639 (MINLSSLWTV…LSVMELDSYP (63 aa)) the chain is on the extracellular side. Asn-619 is a glycosylation site (N-linked (GlcNAc...) asparagine). A helical transmembrane segment spans residues 640–660 (LYAIYLIVIGLSGGFMVLYYV). Topologically, residues 661–673 (SLRFIKQKPSQDW) are cytoplasmic.

It belongs to the ABC transporter superfamily. ABCG family. Eye pigment precursor importer (TC 3.A.1.204) subfamily. Heterodimer with ABCG8. Mg(2+) is required as a cofactor. Post-translationally, N-glycosylated. As to expression, predominantly expressed in the liver. Low expression levels in the small intestine and colon. Very low levels in other tissues, including brain, heart and spleen.

It is found in the cell membrane. It localises to the apical cell membrane. It catalyses the reaction cholesterol(in) + ATP + H2O = cholesterol(out) + ADP + phosphate + H(+). The enzyme catalyses sitosterol(in) + ATP + H2O = sitosterol(out) + ADP + phosphate + H(+). Its activity is regulated as follows. The ATPase activity of the heterodimer is stimulated by cholate. Taurocholate, glycocholate, taurochenodeoxycholate, glycochenodeoxycholate and taurodeoxycholate also stimulate ATPase activity, but to a lower degree. Glycodeoxycholate has no significant effect on ATPase activity. ATPase activity is inhibited by vanadate and by berillium fluoride. ABCG5 and ABCG8 form an obligate heterodimer that mediates Mg(2+)- and ATP-dependent sterol transport across the cell membrane. Plays an essential role in the selective transport of the dietary cholesterol in and out of the enterocytes and in the selective sterol excretion by the liver into bile. Required for normal sterol homeostasis. The heterodimer with ABCG5 has ATPase activity. The chain is ATP-binding cassette sub-family G member 8 from Homo sapiens (Human).